The primary structure comprises 36 residues: Glucagon-2 (36 aa).

It belongs to the glucagon family.

The protein resides in the secreted. In terms of biological role, glucagon plays a key role in glucose metabolism and homeostasis. Regulates blood glucose by increasing gluconeogenesis and decreasing glycolysis. In Huso dauricus (Kaluga sturgeon), this protein is Glucagon-2.